Consider the following 476-residue polypeptide: Aspartyl/glutamyl-tRNA(Asn/Gln) amidotransferase subunit B (476 aa).

Belongs to the GatB/GatE family. GatB subfamily. In terms of assembly, heterotrimer of A, B and C subunits.

The catalysed reaction is L-glutamyl-tRNA(Gln) + L-glutamine + ATP + H2O = L-glutaminyl-tRNA(Gln) + L-glutamate + ADP + phosphate + H(+). The enzyme catalyses L-aspartyl-tRNA(Asn) + L-glutamine + ATP + H2O = L-asparaginyl-tRNA(Asn) + L-glutamate + ADP + phosphate + 2 H(+). Its function is as follows. Allows the formation of correctly charged Asn-tRNA(Asn) or Gln-tRNA(Gln) through the transamidation of misacylated Asp-tRNA(Asn) or Glu-tRNA(Gln) in organisms which lack either or both of asparaginyl-tRNA or glutaminyl-tRNA synthetases. The reaction takes place in the presence of glutamine and ATP through an activated phospho-Asp-tRNA(Asn) or phospho-Glu-tRNA(Gln). The polypeptide is Aspartyl/glutamyl-tRNA(Asn/Gln) amidotransferase subunit B (Clostridium botulinum (strain Langeland / NCTC 10281 / Type F)).